The primary structure comprises 145 residues: Toxin Res (145 aa).

Belongs to the MbcT/ParT/Res family. As to quaternary structure, homodimer. Forms a complex with cognate antitoxin Xre; the 2 toxin molecules dimerize and each contacts an Xre homodimer. Most Res-Xre contacts are between the antitoxin molecule closest to the toxin.

Functionally, toxic component of a type II toxin-antitoxin (TA) system. Expression in E.coli inhibits cell growth. In vivo it is probably neutralized by cognate antitoxin Xre; this has not been shown upon expression in E.coli. Probably depletes intracellular NAD(+). The protein is Toxin Res of Pseudomonas putida (strain ATCC 47054 / DSM 6125 / CFBP 8728 / NCIMB 11950 / KT2440).